The sequence spans 499 residues: Glycerol kinase (499 aa).

Position 13 (Thr-13) interacts with ADP. The ATP site is built by Thr-13, Thr-14, and Ser-15. Residue Thr-13 coordinates sn-glycerol 3-phosphate. Arg-17 contacts ADP. Positions 83, 84, 135, and 245 each coordinate sn-glycerol 3-phosphate. Arg-83, Glu-84, Tyr-135, Asp-245, and Gln-246 together coordinate glycerol. Residues Thr-267 and Gly-310 each coordinate ADP. Residues Thr-267, Gly-310, Gln-314, and Gly-411 each contribute to the ATP site. ADP is bound by residues Gly-411 and Asn-415.

It belongs to the FGGY kinase family. Homotetramer and homodimer (in equilibrium).

The enzyme catalyses glycerol + ATP = sn-glycerol 3-phosphate + ADP + H(+). The protein operates within polyol metabolism; glycerol degradation via glycerol kinase pathway; sn-glycerol 3-phosphate from glycerol: step 1/1. With respect to regulation, activated by phosphorylation and inhibited by fructose 1,6-bisphosphate (FBP). In terms of biological role, key enzyme in the regulation of glycerol uptake and metabolism. Catalyzes the phosphorylation of glycerol to yield sn-glycerol 3-phosphate. This is Glycerol kinase from Halothermothrix orenii (strain H 168 / OCM 544 / DSM 9562).